Consider the following 368-residue polypeptide: Ferrochelatase (368 aa).

Fe cation-binding residues include H209 and E290. The segment at 341-368 is disordered; sequence ADLGGGREATGQAAERSRQRALALGAKQ.

This sequence belongs to the ferrochelatase family.

The protein localises to the cytoplasm. It carries out the reaction heme b + 2 H(+) = protoporphyrin IX + Fe(2+). It functions in the pathway porphyrin-containing compound metabolism; protoheme biosynthesis; protoheme from protoporphyrin-IX: step 1/1. Catalyzes the ferrous insertion into protoporphyrin IX. This is Ferrochelatase from Nitrosococcus oceani (strain ATCC 19707 / BCRC 17464 / JCM 30415 / NCIMB 11848 / C-107).